The chain runs to 967 residues: Nonsense-mediated mRNA decay factor SMG8 (967 aa).

Residues 627–702 (LNEGEDADAD…SCPESQSVAS (76 aa)) are disordered. Residues 628-639 (NEGEDADADADS) show a composition bias toward acidic residues. The span at 643–666 (RSQICSSGQSSRSRSNSSSSDTSS) shows a compositional bias: low complexity. A compositionally biased stretch (polar residues) spans 686–702 (ATEALSESCPESQSVAS).

Belongs to the SMG8 family.

Its function is as follows. Involved in nonsense-mediated decay (NMD) of mRNAs containing premature stop codons. Probable component of kinase complex containing nonC and recruited to stalled ribosomes. This Drosophila mojavensis (Fruit fly) protein is Nonsense-mediated mRNA decay factor SMG8.